The chain runs to 203 residues: Translation initiation factor IF-3 (203 aa).

Positions 172 to 182 (EAPKNEKKTKE) are enriched in basic and acidic residues. Positions 172-203 (EAPKNEKKTKENNPPFNRINLMKGENHAKNED) are disordered.

The protein belongs to the IF-3 family. As to quaternary structure, monomer.

It is found in the cytoplasm. IF-3 binds to the 30S ribosomal subunit and shifts the equilibrium between 70S ribosomes and their 50S and 30S subunits in favor of the free subunits, thus enhancing the availability of 30S subunits on which protein synthesis initiation begins. The protein is Translation initiation factor IF-3 of Helicobacter pylori (strain J99 / ATCC 700824) (Campylobacter pylori J99).